The sequence spans 431 residues: 23S rRNA (uracil(1939)-C(5))-methyltransferase RlmD (431 aa).

The 59-residue stretch at 10–68 folds into the TRAM domain; that stretch reads RVTTRQIITVKVNDLDSFGQGVARHNGKALFIPGLLPEESAEVIITEDKKQFARARVSR. [4Fe-4S] cluster is bound by residues Cys81, Cys87, Cys90, and Cys161. S-adenosyl-L-methionine-binding residues include Gln264, Phe293, Asn298, Glu314, Asn341, and Asp362. The Nucleophile role is filled by Cys388.

Belongs to the class I-like SAM-binding methyltransferase superfamily. RNA M5U methyltransferase family. RlmD subfamily.

The enzyme catalyses uridine(1939) in 23S rRNA + S-adenosyl-L-methionine = 5-methyluridine(1939) in 23S rRNA + S-adenosyl-L-homocysteine + H(+). In terms of biological role, catalyzes the formation of 5-methyl-uridine at position 1939 (m5U1939) in 23S rRNA. The protein is 23S rRNA (uracil(1939)-C(5))-methyltransferase RlmD of Salmonella typhi.